The following is a 673-amino-acid chain: Sodium/myo-inositol cotransporter 2 (673 aa).

The Extracellular segment spans residues 1 to 27; the sequence is MESTTSSPQPPPSDALEAFPQKSMEPA. A helical membrane pass occupies residues 28–48; that stretch reads DIVVLVLYFLFVLAVGLWSTV. Residues 49-56 lie on the Cytoplasmic side of the membrane; sequence RTKRDTVK. Residues 57-77 form a helical membrane-spanning segment; that stretch reads GYFLAGGDMVWWPVGASLFAS. Asn-78 is a topological domain (extracellular). The chain crosses the membrane as a helical span at residues 79–99; sequence VGSGHFIGLAGSGAAVGISVA. Over 100-102 the chain is Cytoplasmic; that stretch reads AYE. A helical transmembrane segment spans residues 103-123; it reads LNGLFSVLMLAWIFLPIYIAG. Over 124–180 the chain is Extracellular; the sequence is QVTTMPEYLKRRFGGSRIPITLASIYPSTHSLTILQVDMYAGAIFIQQSLHLDLYLA. Residues 181–201 form a helical membrane-spanning segment; sequence IVGLLAVTALYTVAGGLAAVI. The Cytoplasmic portion of the chain corresponds to 202–208; it reads YTDALQT. Residues 209–229 form a helical membrane-spanning segment; that stretch reads VIMLIGAFILMGYSFAAVGGM. The Extracellular segment spans residues 230-272; the sequence is EGLKDQYFLALASNRSENSSCGLPREDAFHIFRDPLTSDLPWP. The helical transmembrane segment at 273–293 threads the bilayer; it reads GILFGMSIPSLWYWCTDQVIV. The Cytoplasmic segment spans residues 294–308; the sequence is QRSLAAKNLSHAKGG. The helical transmembrane segment at 309–329 threads the bilayer; sequence SLMAAYLKVLPLFLMVFPGMV. The Extracellular portion of the chain corresponds to 330–375; it reads SRILFPDQVACAHPDICQRVCSNPSGCSDIAYPKLVLELLPTGLRG. The helical transmembrane segment at 376 to 396 threads the bilayer; the sequence is LMMAVMVAALMSSLTSIFNSA. Over 397–418 the chain is Cytoplasmic; sequence STIFTMDLWHHIRPRASERELM. Residues 419–439 traverse the membrane as a helical segment; the sequence is IVGRVFVLALVLVSILWIPVV. At 440 to 446 the chain is on the extracellular side; sequence QASQGGQ. Residues 447–467 form a helical membrane-spanning segment; that stretch reads LFIYIQSISSYLQPPVAVVFI. The Cytoplasmic segment spans residues 468 to 479; it reads MGCFWKRTNEKG. Residues 480–500 form a helical membrane-spanning segment; the sequence is AFSGLILGLLLGLVRLILDFV. Topologically, residues 501 to 521 are extracellular; sequence YVQPRCDQPDDRPAVVKDVHY. A helical membrane pass occupies residues 522–542; the sequence is LYFSMILSSTTLITVFTVSWF. Over 543-652 the chain is Cytoplasmic; the sequence is TETPSKEMVS…SLEENPLVKT (110 aa). Residues 653-673 form a helical membrane-spanning segment; it reads LLDVNCIVCISCAIFLWGYFA.

It belongs to the sodium:solute symporter (SSF) (TC 2.A.21) family. In terms of tissue distribution, expressed in kidney and small intestine.

The protein localises to the membrane. It localises to the apical cell membrane. It catalyses the reaction myo-inositol(out) + 2 Na(+)(out) = myo-inositol(in) + 2 Na(+)(in). The enzyme catalyses 1D-chiro-inositol(out) + 2 Na(+)(out) = 1D-chiro-inositol(in) + 2 Na(+)(in). The catalysed reaction is D-glucose(out) + 2 Na(+)(out) = D-glucose(in) + 2 Na(+)(in). It carries out the reaction D-xylose(out) + 2 Na(+)(out) = D-xylose(in) + 2 Na(+)(in). Its activity is regulated as follows. MI transport activity inhibited by D-chiro-inositol (DCI), phlorizin (Pz) and sodium (Na(+)). Insulin increases D-chiro-inositol uptake. Functionally, involved in the sodium-dependent cotransport of myo-inositol (MI) with a Na(+):MI stoichiometry of 2:1. Exclusively responsible for apical MI transport and absorption in intestine. Can also transport D-chiro-inositol (DCI) but not L-fucose. Exhibits stereospecific cotransport of both D-glucose and D-xylose. May induce apoptosis through the TNF-alpha, PDCD1 pathway. May play a role in the regulation of MI concentration in serum, involving reabsorption in at least the proximal tubule of the kidney. This Rattus norvegicus (Rat) protein is Sodium/myo-inositol cotransporter 2.